Here is a 268-residue protein sequence, read N- to C-terminus: Calpain small subunit 1 (268 aa).

Methionine 1 is modified (N-acetylmethionine). Serine 6 carries the phosphoserine modification. An EF-hand 1; atypical domain is found at 91–125 (EANESEEVRQFRRLFAQLAGDDMEVSATELMNILN). Residues alanine 109, aspartate 112, glutamate 114, glutamate 119, aspartate 137, aspartate 152, aspartate 154, threonine 156, lysine 158, and glutamate 163 each contribute to the Ca(2+) site. EF-hand domains lie at 139–172 (FGID…NNIK), 169–204 (NNIK…AGFH), 205–233 (LNEH…ISCL), and 234–268 (VRLD…TMYS). N6-acetyllysine is present on lysine 179. Residues aspartate 182, aspartate 184, serine 186, threonine 188, glutamate 193, and aspartate 225 each coordinate Ca(2+).

In terms of assembly, homodimer or heterodimer of a large (catalytic) and a small (regulatory) subunit. In presence of calcium, the heterodimer dissociates.

It is found in the cytoplasm. The protein resides in the cell membrane. In terms of biological role, regulatory subunit of the calcium-regulated non-lysosomal thiol-protease which catalyzes limited proteolysis of substrates involved in cytoskeletal remodeling and signal transduction. Essential for embryonic development. The chain is Calpain small subunit 1 (CAPNS1) from Homo sapiens (Human).